The following is a 73-amino-acid chain: V-type proton ATPase subunit e (73 aa).

At 1–3 (MSS) the chain is on the lumenal side. A helical membrane pass occupies residues 4-24 (FYTVVGVFIVVSAMSVLFWIM). Residues 25–35 (APKNNQAVWRS) lie on the Cytoplasmic side of the membrane. Residues 36 to 56 (TVILTLAMMFLMWAITFLCQL) traverse the membrane as a helical segment. Residues 57–73 (HPLVAPRRSDLRPEFAE) lie on the Lumenal side of the membrane.

It belongs to the V-ATPase e1/e2 subunit family. In terms of assembly, V-ATPase is a heteromultimeric enzyme composed of a peripheral catalytic V1 complex (components A to H) attached to an integral membrane V0 proton pore complex (components: a, c, c', c'', d, e, f and VOA1).

The protein resides in the vacuole membrane. In terms of biological role, subunit of the V0 complex of vacuolar(H+)-ATPase (V-ATPase), a multisubunit enzyme composed of a peripheral complex (V1) that hydrolyzes ATP and a membrane integral complex (V0) that translocates protons. V-ATPase is responsible for acidifying and maintaining the pH of intracellular compartments. The protein is V-type proton ATPase subunit e (VMA9) of Saccharomyces cerevisiae (strain ATCC 204508 / S288c) (Baker's yeast).